The primary structure comprises 312 residues: Olfactory receptor 1D2 (312 aa).

Residues 1–25 (MDGGNQSEGSEFLLLGMSESPEQQQ) lie on the Extracellular side of the membrane. N5 carries N-linked (GlcNAc...) asparagine glycosylation. Residues 26-49 (ILFWMFLSMYLVTVVGNVLIILAI) traverse the membrane as a helical segment. The Cytoplasmic portion of the chain corresponds to 50–57 (NSDSHLHT). Residues 58-79 (PMYFFLANLSFTDLFFVTNTIP) traverse the membrane as a helical segment. Over 80 to 100 (KMLVNLQSQNKAISYAGCLTQ) the chain is Extracellular. Cysteines 97 and 189 form a disulfide. A helical membrane pass occupies residues 101 to 120 (LYFLVSLVALDNLILAVMAY). Over 121 to 139 (DRYVAICCPLHYTTAMSPK) the chain is Cytoplasmic. A helical membrane pass occupies residues 140 to 158 (LCILLLSLCWVLSVLYGLI). At 159-196 (HTILMTRVTFCGSRKIHYIFCEMYVLLRMACSNIQINH) the chain is on the extracellular side. An N-linked (GlcNAc...) asparagine glycan is attached at N195. Residues 197–219 (TVLIATGCFIFLIPFGFVIISYV) form a helical membrane-spanning segment. Over 220–236 (LIIRAILRIPSVSKKYK) the chain is Cytoplasmic. The chain crosses the membrane as a helical span at residues 237 to 259 (AFSTCASHLGAVSLFYGTLCMVY). Topologically, residues 260 to 271 (LKPLHTFSVKDS) are extracellular. A helical transmembrane segment spans residues 272 to 291 (VATVMYAVVTPMMNPFIYSL). At 292 to 312 (RNKDMHGALGRLLDTHFKRLT) the chain is on the cytoplasmic side.

It belongs to the G-protein coupled receptor 1 family.

Its subcellular location is the cell membrane. In terms of biological role, odorant receptor. The sequence is that of Olfactory receptor 1D2 (OR1D2) from Gorilla gorilla gorilla (Western lowland gorilla).